A 188-amino-acid polypeptide reads, in one-letter code: Transcription factor FapR (188 aa).

It belongs to the FapR family.

Its function is as follows. Transcriptional factor involved in regulation of membrane lipid biosynthesis by repressing genes involved in fatty acid and phospholipid metabolism. This chain is Transcription factor FapR, found in Bacillus licheniformis (strain ATCC 14580 / DSM 13 / JCM 2505 / CCUG 7422 / NBRC 12200 / NCIMB 9375 / NCTC 10341 / NRRL NRS-1264 / Gibson 46).